The chain runs to 635 residues: DNA mismatch repair protein MutL (635 aa).

A disordered region spans residues 359–399; that stretch reads GTNKYAQPEAAKSSAAEQAVARERSSARERAAPAYKEDHPY. The segment covering 364–377 has biased composition (low complexity); sequence AQPEAAKSSAAEQA. Residues 378–399 are compositionally biased toward basic and acidic residues; it reads VARERSSARERAAPAYKEDHPY.

The protein belongs to the DNA mismatch repair MutL/HexB family.

Its function is as follows. This protein is involved in the repair of mismatches in DNA. It is required for dam-dependent methyl-directed DNA mismatch repair. May act as a 'molecular matchmaker', a protein that promotes the formation of a stable complex between two or more DNA-binding proteins in an ATP-dependent manner without itself being part of a final effector complex. The protein is DNA mismatch repair protein MutL of Yersinia pestis bv. Antiqua (strain Antiqua).